A 314-amino-acid polypeptide reads, in one-letter code: Methionyl-tRNA formyltransferase (314 aa).

Residue 110 to 113 (SLLP) participates in (6S)-5,6,7,8-tetrahydrofolate binding.

It belongs to the Fmt family.

The enzyme catalyses L-methionyl-tRNA(fMet) + (6R)-10-formyltetrahydrofolate = N-formyl-L-methionyl-tRNA(fMet) + (6S)-5,6,7,8-tetrahydrofolate + H(+). In terms of biological role, attaches a formyl group to the free amino group of methionyl-tRNA(fMet). The formyl group appears to play a dual role in the initiator identity of N-formylmethionyl-tRNA by promoting its recognition by IF2 and preventing the misappropriation of this tRNA by the elongation apparatus. This chain is Methionyl-tRNA formyltransferase, found in Lactobacillus johnsonii (strain CNCM I-12250 / La1 / NCC 533).